Consider the following 381-residue polypeptide: ELMO domain-containing protein 3 (381 aa).

Residues 170–324 (THGRVLQTIY…DLEALAKKSP (155 aa)) enclose the ELMO domain.

Both isoform 1 and isoform 2 are widely expressed.

It is found in the cell projection. It localises to the stereocilium. The protein resides in the kinocilium. The protein localises to the cytoplasm. Its subcellular location is the cytoskeleton. Functionally, acts as a GTPase-activating protein (GAP) for ARL2 with low specific activity. This is ELMO domain-containing protein 3 (Elmod3) from Mus musculus (Mouse).